We begin with the raw amino-acid sequence, 398 residues long: Phosphopentomutase (398 aa).

Mn(2+) contacts are provided by aspartate 13, aspartate 290, histidine 295, aspartate 331, histidine 332, and histidine 343.

Belongs to the phosphopentomutase family. Requires Mn(2+) as cofactor.

The protein resides in the cytoplasm. The catalysed reaction is 2-deoxy-alpha-D-ribose 1-phosphate = 2-deoxy-D-ribose 5-phosphate. It catalyses the reaction alpha-D-ribose 1-phosphate = D-ribose 5-phosphate. It functions in the pathway carbohydrate degradation; 2-deoxy-D-ribose 1-phosphate degradation; D-glyceraldehyde 3-phosphate and acetaldehyde from 2-deoxy-alpha-D-ribose 1-phosphate: step 1/2. Isomerase that catalyzes the conversion of deoxy-ribose 1-phosphate (dRib-1-P) and ribose 1-phosphate (Rib-1-P) to deoxy-ribose 5-phosphate (dRib-5-P) and ribose 5-phosphate (Rib-5-P), respectively. This chain is Phosphopentomutase, found in Clostridium tetani (strain Massachusetts / E88).